The chain runs to 327 residues: Zinc transport protein ZntB (327 aa).

Residues 1 to 271 are Cytoplasmic-facing; it reads MESFAGKELQ…AMNRRTYTMS (271 aa). Residues 272 to 292 form a helical membrane-spanning segment; it reads LLAMVFLPTTFLTGLFGVNLG. Residues 293-300 are Periplasmic-facing; that stretch reads GIPGGDAP. A helical transmembrane segment spans residues 301 to 321; the sequence is FGFFTFCLMLVILVGGVAWWL. Residues 322-327 are Cytoplasmic-facing; the sequence is KRSKWL.

This sequence belongs to the CorA metal ion transporter (MIT) (TC 1.A.35) family.

It is found in the cell inner membrane. It carries out the reaction Zn(2+)(out) + H(+)(out) = Zn(2+)(in) + H(+)(in). Functionally, zinc transporter. Acts as a Zn(2+):proton symporter, which likely mediates zinc ion uptake. This chain is Zinc transport protein ZntB, found in Pectobacterium carotovorum subsp. carotovorum (strain PC1).